Here is a 540-residue protein sequence, read N- to C-terminus: Ecdysone 20-monooxygenase (540 aa).

Residue Cys-488 coordinates heme.

The protein belongs to the cytochrome P450 family. It depends on heme as a cofactor. In terms of tissue distribution, strong expression by embryonic stage 10 in epidermis, decreases significantly in older embryos. Third instar larvae show expression in the midgut copper cells, Malpighian tubules and fat body. In the adult ovaries, expression is seen in both nurse cells and centripetally migrating follicle cells.

Its subcellular location is the mitochondrion membrane. The catalysed reaction is ecdysone + AH2 + O2 = 20-hydroxyecdysone + A + H2O. It participates in steroid biosynthesis; ecdysteroid biosynthesis. In terms of biological role, required for CNS development; midline glial cells. Involved in the metabolism of insect hormones; responsible for all ecdysone 20-monooxygenase activity during embryonic, larval and adult stages. May be involved in the breakdown of synthetic insecticides. The polypeptide is Ecdysone 20-monooxygenase (shd) (Drosophila melanogaster (Fruit fly)).